A 116-amino-acid chain; its full sequence is Large ribosomal subunit protein bL19 (116 aa).

The protein belongs to the bacterial ribosomal protein bL19 family.

In terms of biological role, this protein is located at the 30S-50S ribosomal subunit interface and may play a role in the structure and function of the aminoacyl-tRNA binding site. The sequence is that of Large ribosomal subunit protein bL19 from Pseudothermotoga lettingae (strain ATCC BAA-301 / DSM 14385 / NBRC 107922 / TMO) (Thermotoga lettingae).